The chain runs to 498 residues: MASQGTKRSYEQMETDGERQNATEIRASVGKMIDGIGRFYIQMCTELKLSDYEGRLIQNSLTIERMVLSAFDERRNKYLEEHPSAGKDPKKTGGPIYKRVDRKWMRELVLYDKEEIRRIWRQANNGDDATAGLTHMMIWHSNLNDTTYQRTRALVRTGMDPRMCSLMQGSTLPRRSGAAGAAVKGVGTMVMELIRMIKRGINDRNFWRGENGRKTRIAYERMCNILKGKFQTAAQRAMMDQVRESRNPGNAEIEDLIFLARSALILRGSVAHKSCLPACVYGPAVASGYDFEKEGYSLVGIDPFKLLQNSQVYSLIRPNENPAHKSQLVWMACNSAAFEDLRVSSFIRGTKVIPRGKLSTRGVQIASNENMDTMESSTLELRSRYWAIRTRSGGNTNQQRASAGQISIQPTFSVQRNLPFDKTTIMAAFTGNAEGRTSDMRAEIIRVMESAKPEEVSFQGRGVFELSDEKAANPIVPSFDMSNEGSYFFGDNAEEYDN.

The Unconventional nuclear localization signal signature appears at 1–18; the sequence is MASQGTKRSYEQMETDGE. The segment at 1-21 is disordered; sequence MASQGTKRSYEQMETDGERQN. Over residues 8-21 the composition is skewed to basic and acidic residues; that stretch reads RSYEQMETDGERQN. The Bipartite nuclear localization signal motif lies at 198–216; it reads KRGINDRNFWRGENGRKTR.

Belongs to the influenza viruses nucleoprotein family. As to quaternary structure, homomultimerizes to form the nucleocapsid. May bind host exportin-1/XPO1. Binds to viral genomic RNA. Protein-RNA contacts are mediated by a combination of electrostatic interactions between positively charged residues and the phosphate backbone and planar interactions between aromatic side chains and bases. Late in virus-infected cells, may be cleaved from a 56-kDa protein to a 53-kDa protein by a cellular caspase. This cleavage might be a marker for the onset of apoptosis in infected cells or have a specific function in virus host interaction.

The protein resides in the virion. It localises to the host nucleus. Its function is as follows. Encapsidates the negative strand viral RNA, protecting it from nucleases. The encapsidated genomic RNA is termed the ribonucleoprotein (RNP) and serves as template for transcription and replication. The RNP needs to be localized in the host nucleus to start an infectious cycle, but is too large to diffuse through the nuclear pore complex. NP comprises at least 2 nuclear localization signals that are responsible for the active RNP import into the nucleus through cellular importin alpha/beta pathway. Later in the infection, nclear export of RNPs are mediated through viral proteins NEP interacting with M1 which binds nucleoproteins. It is possible that nucleoprotein binds directly host exportin-1/XPO1 and plays an active role in RNPs nuclear export. M1 interaction with RNP seems to hide nucleoprotein's nuclear localization signals. Soon after a virion infects a new cell, M1 dissociates from the RNP under acidification of the virion driven by M2 protein. Dissociation of M1 from RNP unmasks nucleoprotein's nuclear localization signals, targeting the RNP to the nucleus. This Influenza A virus (strain A/USA:Albany/12/1951 H1N1) protein is Nucleoprotein.